The primary structure comprises 187 residues: Avirulence protein ATR39-2 (187 aa).

The signal sequence occupies residues 1 to 20 (MVKCTPLLALTVIVSAGSDA). Residues 49 to 66 (RVLRASDVPNEVAAGESR) carry the RxLR-dEER motif.

The protein belongs to the RxLR effector family.

Its subcellular location is the secreted. It is found in the host cell. Its function is as follows. Secreted effector that acts as an elicitor of hypersensitive response (HR) specifically on plants carrying defense protein RPP39. The allele ATR39-1 is recognized by RPP39, whereas the ATR39-2 allele is nor recognized. The sequence is that of Avirulence protein ATR39-2 from Hyaloperonospora arabidopsidis (strain Emoy2) (Downy mildew agent).